The following is a 152-amino-acid chain: SKP1-like protein 10 (152 aa).

The tract at residues 94-152 (IMAANYLNIKSLLDLACQTVADMIKDNTVEHTRKFFNIENDYTHEEEEAVRRENQWGFE) is interaction with the F-box domain of F-box proteins.

It belongs to the SKP1 family. Part of a SCF (SKP1-cullin-F-box) protein ligase complex. Interacts with CPR1/CPR30. Expressed in young seedlings, roots, leaves, floral stems, inflorescences, and siliques.

The protein resides in the nucleus. Its pathway is protein modification; protein ubiquitination. Its function is as follows. Involved in ubiquitination and subsequent proteasomal degradation of target proteins. Together with CUL1, RBX1 and a F-box protein, it forms a SCF E3 ubiquitin ligase complex. The functional specificity of this complex depends on the type of F-box protein. In the SCF complex, it serves as an adapter that links the F-box protein to CUL1. The sequence is that of SKP1-like protein 10 (ASK10) from Arabidopsis thaliana (Mouse-ear cress).